A 395-amino-acid chain; its full sequence is Chorismate synthase (395 aa).

R48 lines the NADP(+) pocket. Residue 125–127 coordinates FMN; that stretch reads RSS. A disordered region spans residues 264 to 292; sequence RNEDWTFDDGESFDHVESEEGDPVPVGND. Residues G298, 313-317, and R340 contribute to the FMN site; that span reads HAPTS. The segment at 373 to 395 is disordered; the sequence is PDRVDGNPGQYDTDYHPSSPDND.

It belongs to the chorismate synthase family. FMNH2 is required as a cofactor.

It carries out the reaction 5-O-(1-carboxyvinyl)-3-phosphoshikimate = chorismate + phosphate. Its pathway is metabolic intermediate biosynthesis; chorismate biosynthesis; chorismate from D-erythrose 4-phosphate and phosphoenolpyruvate: step 7/7. Catalyzes the anti-1,4-elimination of the C-3 phosphate and the C-6 proR hydrogen from 5-enolpyruvylshikimate-3-phosphate (EPSP) to yield chorismate, which is the branch point compound that serves as the starting substrate for the three terminal pathways of aromatic amino acid biosynthesis. This reaction introduces a second double bond into the aromatic ring system. The chain is Chorismate synthase from Halorubrum lacusprofundi (strain ATCC 49239 / DSM 5036 / JCM 8891 / ACAM 34).